Here is a 99-residue protein sequence, read N- to C-terminus: Endothelin receptor type B (99 aa).

Topologically, residues 1-8 (PFGAEMCK) are extracellular. Cysteine 7 and cysteine 88 are oxidised to a cystine. The chain crosses the membrane as a helical span at residues 9 to 30 (LVPFIQKASVGITVLSLCALSI). The Cytoplasmic segment spans residues 31–51 (DRYRAVASWSRIKGIGIPKWT). The chain crosses the membrane as a helical span at residues 52-76 (AVEIVLIWVVSVVLAVPEAIGFDMI). Over 77 to 99 (TMDYKGSYLRICLLHPVQKTAFM) the chain is Extracellular.

This sequence belongs to the G-protein coupled receptor 1 family. Endothelin receptor subfamily. EDNRB sub-subfamily.

It is found in the cell membrane. Functionally, non-specific receptor for endothelin 1, 2, and 3. Mediates its action by association with G proteins that activate a phosphatidylinositol-calcium second messenger system. The protein is Endothelin receptor type B (EDNRB) of Macaca fascicularis (Crab-eating macaque).